The primary structure comprises 600 residues: Elongation factor 4 (600 aa).

Residues 4–187 (KYIRNFSIVA…AIIEQIPPPL (184 aa)) form the tr-type G domain. Residues 16 to 21 (DHGKST) and 134 to 137 (NKID) contribute to the GTP site.

Belongs to the TRAFAC class translation factor GTPase superfamily. Classic translation factor GTPase family. LepA subfamily.

It is found in the cell membrane. The catalysed reaction is GTP + H2O = GDP + phosphate + H(+). Required for accurate and efficient protein synthesis under certain stress conditions. May act as a fidelity factor of the translation reaction, by catalyzing a one-codon backward translocation of tRNAs on improperly translocated ribosomes. Back-translocation proceeds from a post-translocation (POST) complex to a pre-translocation (PRE) complex, thus giving elongation factor G a second chance to translocate the tRNAs correctly. Binds to ribosomes in a GTP-dependent manner. The sequence is that of Elongation factor 4 from Malacoplasma penetrans (strain HF-2) (Mycoplasma penetrans).